Here is a 633-residue protein sequence, read N- to C-terminus: DNA mismatch repair protein MutL (633 aa).

Disordered stretches follow at residues Arg-337–Gly-364 and Val-383–Glu-405. The span at Trp-385–Ser-396 shows a compositional bias: gly residues.

It belongs to the DNA mismatch repair MutL/HexB family.

In terms of biological role, this protein is involved in the repair of mismatches in DNA. It is required for dam-dependent methyl-directed DNA mismatch repair. May act as a 'molecular matchmaker', a protein that promotes the formation of a stable complex between two or more DNA-binding proteins in an ATP-dependent manner without itself being part of a final effector complex. The protein is DNA mismatch repair protein MutL of Pseudomonas aeruginosa (strain UCBPP-PA14).